The sequence spans 650 residues: ATP-dependent zinc metalloprotease FtsH (650 aa).

Topologically, residues 1-10 (MKTKKSKSTL) are cytoplasmic. Residues 11–31 (WFWLIILLAIIVTIIIIAVTV) form a helical membrane-spanning segment. The Extracellular segment spans residues 32 to 123 (KGTTQVISDA…LVYQGSVGMA (92 aa)). A helical transmembrane segment spans residues 124 to 144 (LLVSLAPLLIYVLLFGGIIWF). Residues 145 to 650 (MMKSSSGAGA…DIKVEDLDID (506 aa)) lie on the Cytoplasmic side of the membrane. 217–224 (GPPGTGKT) lines the ATP pocket. Histidine 437 contacts Zn(2+). Glutamate 438 is an active-site residue. Zn(2+) contacts are provided by histidine 441 and aspartate 515.

In the central section; belongs to the AAA ATPase family. It in the C-terminal section; belongs to the peptidase M41 family. Homohexamer. The cofactor is Zn(2+).

It is found in the cell membrane. Functionally, acts as a processive, ATP-dependent zinc metallopeptidase for both cytoplasmic and membrane proteins. Plays a role in the quality control of integral membrane proteins. The protein is ATP-dependent zinc metalloprotease FtsH of Mesoplasma florum (strain ATCC 33453 / NBRC 100688 / NCTC 11704 / L1) (Acholeplasma florum).